The chain runs to 131 residues: Small ribosomal subunit protein uS8 (131 aa).

The protein belongs to the universal ribosomal protein uS8 family. As to quaternary structure, part of the 30S ribosomal subunit. Contacts proteins S5 and S12.

Functionally, one of the primary rRNA binding proteins, it binds directly to 16S rRNA central domain where it helps coordinate assembly of the platform of the 30S subunit. The sequence is that of Small ribosomal subunit protein uS8 from Novosphingobium aromaticivorans (strain ATCC 700278 / DSM 12444 / CCUG 56034 / CIP 105152 / NBRC 16084 / F199).